Reading from the N-terminus, the 133-residue chain is Ribonuclease P protein component (133 aa).

It belongs to the RnpA family. As to quaternary structure, consists of a catalytic RNA component (M1 or rnpB) and a protein subunit.

It catalyses the reaction Endonucleolytic cleavage of RNA, removing 5'-extranucleotides from tRNA precursor.. Its function is as follows. RNaseP catalyzes the removal of the 5'-leader sequence from pre-tRNA to produce the mature 5'-terminus. It can also cleave other RNA substrates such as 4.5S RNA. The protein component plays an auxiliary but essential role in vivo by binding to the 5'-leader sequence and broadening the substrate specificity of the ribozyme. The chain is Ribonuclease P protein component from Pseudomonas entomophila (strain L48).